Reading from the N-terminus, the 140-residue chain is Nucleoside diphosphate kinase (140 aa).

6 residues coordinate ATP: Lys-11, Phe-59, Arg-87, Thr-93, Arg-104, and Asn-114. His-117 serves as the catalytic Pros-phosphohistidine intermediate.

Belongs to the NDK family. Homotetramer. Requires Mg(2+) as cofactor.

It localises to the cytoplasm. It catalyses the reaction a 2'-deoxyribonucleoside 5'-diphosphate + ATP = a 2'-deoxyribonucleoside 5'-triphosphate + ADP. The enzyme catalyses a ribonucleoside 5'-diphosphate + ATP = a ribonucleoside 5'-triphosphate + ADP. Its function is as follows. Major role in the synthesis of nucleoside triphosphates other than ATP. The ATP gamma phosphate is transferred to the NDP beta phosphate via a ping-pong mechanism, using a phosphorylated active-site intermediate. This chain is Nucleoside diphosphate kinase, found in Rhizobium rhizogenes (strain K84 / ATCC BAA-868) (Agrobacterium radiobacter).